A 140-amino-acid chain; its full sequence is Pro-vaccinia growth factor (140 aa).

An N-terminal signal peptide occupies residues 1–18; it reads MSMKYLMLLFAAMIIRSF. Topologically, residues 19 to 100 are extracellular; it reads ADSGNAIETT…SENPNTTTSY (82 aa). N-linked (GlcNAc...) asparagine; by host glycosylation is present at N34. In terms of domain architecture, EGF-like spans 41-81; it reads AIRLCGPEGDGYCLHGDCIHARDIDGMYCRCSHGYTGIRCQ. 3 disulfides stabilise this stretch: C45–C58, C53–C69, and C71–C80. N95 carries N-linked (GlcNAc...) asparagine; by host glycosylation. The helical transmembrane segment at 101-121 threads the bilayer; that stretch reads IPSPGIVLVLVGIIIITCCSL. Residues 122-140 are Cytoplasmic-facing; the sequence is SVYRFTRRTKLPIQDMVVP.

Belongs to the orthopoxvirus OPG019 family. As to quaternary structure, vaccinia growth factor interacts with host EGFR and promotes EGFR dimerization.

The protein resides in the host membrane. The protein localises to the secreted. Stimulates cellular proliferation (hyperplasia)and mobility around infected cells to promote rapid and efficient spread of infection. This effect is beneficial for virus replication in vivo, because poxviruses replicate possibly better in proliferating cells than in quiescent cells. Acts by binding host EGFR, inducing its dimerization, autophosphorylation and leading to activation of several cellular pathways regulating cell proliferation or cell survival. The activation by host EGFR of mitogen activated protein kinases (MAPK) and extracellular-signal regulated kinases (ERK) are essential for the positive effect of vaccinia growth factor on poxvirus virulence in vivo. This Vaccinia virus (strain L-IVP) (VACV) protein is Pro-vaccinia growth factor (OPG019).